The sequence spans 84 residues: U21-theraphotoxin-Cg1b (84 aa).

A signal peptide spans 1 to 21 (MKVSVLITLAVLGVMFLLTSA). Residues 22-47 (EERGSDQMDSPAWLKSMERIFQSEER) constitute a propeptide that is removed on maturation. Disulfide bonds link C49–C63, C56–C68, and C62–C76. The residue at position 82 (F82) is a Phenylalanine amide.

The protein belongs to the neurotoxin 10 (Hwtx-1) family. 05 (F4a) subfamily. In terms of tissue distribution, expressed by the venom gland.

It localises to the secreted. Probable ion channel inhibitor. This chain is U21-theraphotoxin-Cg1b, found in Chilobrachys guangxiensis (Chinese earth tiger tarantula).